Here is a 246-residue protein sequence, read N- to C-terminus: 1-(5-phosphoribosyl)-5-[(5-phosphoribosylamino)methylideneamino] imidazole-4-carboxamide isomerase (246 aa).

The Proton acceptor role is filled by Asp-8. The active-site Proton donor is the Asp-131.

The protein belongs to the HisA/HisF family.

The protein resides in the cytoplasm. It catalyses the reaction 1-(5-phospho-beta-D-ribosyl)-5-[(5-phospho-beta-D-ribosylamino)methylideneamino]imidazole-4-carboxamide = 5-[(5-phospho-1-deoxy-D-ribulos-1-ylimino)methylamino]-1-(5-phospho-beta-D-ribosyl)imidazole-4-carboxamide. It participates in amino-acid biosynthesis; L-histidine biosynthesis; L-histidine from 5-phospho-alpha-D-ribose 1-diphosphate: step 4/9. This is 1-(5-phosphoribosyl)-5-[(5-phosphoribosylamino)methylideneamino] imidazole-4-carboxamide isomerase from Polaromonas naphthalenivorans (strain CJ2).